The primary structure comprises 119 residues: MSRTKGGTVTHRRHKKVIDAAKGYYGARSTNFRTATQAVDKANQYATRDRKNRKRQFRALWIQRINAAVRQHDEALTYSRFINGLAKAGIEVDRKVLADLAVHEPDAFSAIVDQAKAAL.

The protein belongs to the bacterial ribosomal protein bL20 family.

Binds directly to 23S ribosomal RNA and is necessary for the in vitro assembly process of the 50S ribosomal subunit. It is not involved in the protein synthesizing functions of that subunit. The chain is Large ribosomal subunit protein bL20 from Jannaschia sp. (strain CCS1).